The following is a 301-amino-acid chain: Nucleosome assembly protein 1;3 (301 aa).

The stretch at 15-69 (VETLKNKLQALAEQHVDVLESLAPVVRKRVDVLIEIQSQHDELEAKFLEEKSALE) forms a coiled coil. A Nuclear export signal motif is present at residues 36 to 51 (LAPVVRKRVDVLIEIQ). The interval 279–301 (EDYGASWVDDEEDDDDEYSDEEA) is disordered. S297 is modified (phosphoserine; by CK2).

The protein belongs to the nucleosome assembly protein (NAP) family.

It localises to the nucleus. Its subcellular location is the cytoplasm. Functionally, may modulate chromatin structure by regulation of nucleosome assembly/disassembly. The polypeptide is Nucleosome assembly protein 1;3 (NAP1;3) (Oryza sativa subsp. indica (Rice)).